Reading from the N-terminus, the 550-residue chain is Selinene synthase (550 aa).

Mg(2+)-binding residues include Asp314, Asp318, Asp450, and Glu458. Residues 314-318 (DDIYD) carry the DDXXD motif motif.

Belongs to the terpene synthase family. Mg(2+) is required as a cofactor. The cofactor is Mn(2+).

The catalysed reaction is (2E,6E)-farnesyl diphosphate = (+)-beta-selinene + diphosphate. The enzyme catalyses (2E,6E)-farnesyl diphosphate = alpha-selinene + diphosphate. It participates in secondary metabolite biosynthesis; terpenoid biosynthesis. Sesquiterpene synthase that catalyzes the formation of alpha- and beta-selinene from trans,trans-farnesyl diphosphate (FPP). Also produces some nerolidol. This Ocimum basilicum (Sweet basil) protein is Selinene synthase (SES).